The chain runs to 832 residues: Protein P (832 aa).

The segment at 1–177 is terminal protein domain (TP); sequence MPLSYQHFRK…FCGSPYSWEQ (177 aa). The spacer stretch occupies residues 178–335; that stretch reads ELQHGAESFH…YCLSHIVNLL (158 aa). Residues 186–206 show a composition bias toward polar residues; sequence FHQQSSGILSRPSVGSSLQSK. Disordered regions lie at residues 186–255 and 280–305; these read FHQQ…GHNA and TSEN…RSQS. The segment covering 210 to 220 has biased composition (low complexity); that stretch reads SRLGLQSQQGH. Residues 336–679 are polymerase/reverse transcriptase domain (RT); sequence EDWGPCAEHG…YLNLYPVARQ (344 aa). Residues 346 to 589 form the Reverse transcriptase domain; the sequence is EHHIRIPRTP…YSLNFMGYVI (244 aa). The Mg(2+) site is built by D418, D540, and D541.

It belongs to the hepadnaviridae P protein family.

It catalyses the reaction DNA(n) + a 2'-deoxyribonucleoside 5'-triphosphate = DNA(n+1) + diphosphate. The catalysed reaction is Endonucleolytic cleavage to 5'-phosphomonoester.. Its activity is regulated as follows. Activated by host HSP70 and HSP40 in vitro to be able to bind the epsilon loop of the pgRNA. Because deletion of the RNase H region renders the protein partly chaperone-independent, the chaperones may be needed indirectly to relieve occlusion of the RNA-binding site by this domain. Inhibited by several reverse-transcriptase inhibitors: Lamivudine, Adefovir and Entecavir. Functionally, multifunctional enzyme that converts the viral RNA genome into dsDNA in viral cytoplasmic capsids. This enzyme displays a DNA polymerase activity that can copy either DNA or RNA templates, and a ribonuclease H (RNase H) activity that cleaves the RNA strand of RNA-DNA heteroduplexes in a partially processive 3'- to 5'-endonucleasic mode. Neo-synthesized pregenomic RNA (pgRNA) are encapsidated together with the P protein, and reverse-transcribed inside the nucleocapsid. Initiation of reverse-transcription occurs first by binding the epsilon loop on the pgRNA genome, and is initiated by protein priming, thereby the 5'-end of (-)DNA is covalently linked to P protein. Partial (+)DNA is synthesized from the (-)DNA template and generates the relaxed circular DNA (RC-DNA) genome. After budding and infection, the RC-DNA migrates in the nucleus, and is converted into a plasmid-like covalently closed circular DNA (cccDNA). The activity of P protein does not seem to be necessary for cccDNA generation, and is presumably released from (+)DNA by host nuclear DNA repair machinery. In Hepatitis B virus genotype D subtype ayw (isolate Australia/AustKW/1991) (HBV-D), this protein is Protein P.